We begin with the raw amino-acid sequence, 105 residues long: Small ribosomal subunit protein uS14m (105 aa).

This sequence belongs to the universal ribosomal protein uS14 family. Component of the mitochondrial small ribosomal subunit (mt-SSU). Mature yeast 74S mitochondrial ribosomes consist of a small (37S) and a large (54S) subunit. The 37S small subunit contains a 15S ribosomal RNA (15S mt-rRNA) and at least 32 different proteins. The 54S large subunit contains a 21S rRNA (21S mt-rRNA) and at least 45 different proteins.

It localises to the mitochondrion. In terms of biological role, component of the mitochondrial ribosome (mitoribosome), a dedicated translation machinery responsible for the synthesis of mitochondrial genome-encoded proteins, including at least some of the essential transmembrane subunits of the mitochondrial respiratory chain. The mitoribosomes are attached to the mitochondrial inner membrane and translation products are cotranslationally integrated into the membrane. The sequence is that of Small ribosomal subunit protein uS14m (mrp2) from Schizosaccharomyces pombe (strain 972 / ATCC 24843) (Fission yeast).